A 136-amino-acid polypeptide reads, in one-letter code: Acyl-CoA thioesterase YbgC (136 aa).

D18 is a catalytic residue.

It belongs to the 4-hydroxybenzoyl-CoA thioesterase family.

Functionally, displays acyl-CoA thioesterase activity with short chain aliphatic acyl-CoA thioesters, such as propionyl-CoA and butyryl-CoA. Enzyme activity is relatively low, suggesting that the acyl-CoA thioesters used in the assays are not the physiological substrates. Has no detectable activity with 4-hydroxybenzoyl-CoA, lauroyl-CoA (C12:0), arachidoyl-CoA (C20:0) and arachidonoyl-CoA (C20:4). In Haemophilus influenzae (strain ATCC 51907 / DSM 11121 / KW20 / Rd), this protein is Acyl-CoA thioesterase YbgC (ybgC).